Reading from the N-terminus, the 147-residue chain is Large ribosomal subunit protein uL15 (147 aa).

Residues 1–57 are disordered; it reads MRLEDLRPTPGSMKKRKRVGRGPGSGHGKTSGRGHKGQKARGTGKVHPWFEGGQTPL. Residues 30–44 are compositionally biased toward basic residues; sequence TSGRGHKGQKARGTG.

The protein belongs to the universal ribosomal protein uL15 family. Part of the 50S ribosomal subunit.

Binds to the 23S rRNA. This is Large ribosomal subunit protein uL15 from Thermotoga neapolitana (strain ATCC 49049 / DSM 4359 / NBRC 107923 / NS-E).